The sequence spans 395 residues: tRNA-specific 2-thiouridylase MnmA (395 aa).

ATP-binding positions include 7-14 (GLSGGVDS) and Met-33. The segment at 95 to 97 (NPD) is interaction with target base in tRNA. The Nucleophile role is filled by Cys-100. Residues Cys-100 and Cys-200 are joined by a disulfide bond. Residue Gly-124 coordinates ATP. Residues 150-152 (KDQ) form an interaction with tRNA region. Cys-200 functions as the Cysteine persulfide intermediate in the catalytic mechanism. Residues 346–347 (RY) are interaction with tRNA.

This sequence belongs to the MnmA/TRMU family.

It localises to the cytoplasm. The enzyme catalyses S-sulfanyl-L-cysteinyl-[protein] + uridine(34) in tRNA + AH2 + ATP = 2-thiouridine(34) in tRNA + L-cysteinyl-[protein] + A + AMP + diphosphate + H(+). Catalyzes the 2-thiolation of uridine at the wobble position (U34) of tRNA, leading to the formation of s(2)U34. This chain is tRNA-specific 2-thiouridylase MnmA, found in Christiangramia forsetii (strain DSM 17595 / CGMCC 1.15422 / KT0803) (Gramella forsetii).